Reading from the N-terminus, the 505-residue chain is Actin nucleation-promoting factor WASL (505 aa).

S2 bears the N-acetylserine mark. One can recognise a WH1 domain in the interval 34–141; sequence LGKKCVTMSS…KAVTDLLGRR (108 aa). Disordered regions lie at residues 138 to 163 and 184 to 205; these read LGRRQRKSEKRRDPPNGPNLPMATVD and HTKEKKKGKAKKKRLTKADIGT. Over residues 186-198 the composition is skewed to basic residues; sequence KEKKKGKAKKKRL. Positions 203 to 216 constitute a CRIB domain; it reads IGTPSNFQHIGHVG. S242 carries the post-translational modification Phosphoserine; by TNK2. A Phosphotyrosine; by FAK1 and TNK2 modification is found at Y256. Positions 266–406 are disordered; that stretch reads EAVKNELRRQ…HQVPTTAGNK (141 aa). 2 stretches are compositionally biased toward pro residues: residues 276-364 and 371-391; these read APPP…PPPS and VAPPPPPPPPPPPGPPPPPGL. R307 is subject to Omega-N-methylarginine. 2 consecutive WH2 domains span residues 405 to 422 and 433 to 450; these read NKAALLDQIREGAQLKKV and GRDALLDQIRQGIQLKSV. The tract at residues 476-505 is disordered; the sequence is QKRSKAIHSSDEDEDEDDEEDFEDDDEWED. A phosphoserine mark is found at S484 and S485. Over residues 486–505 the composition is skewed to acidic residues; it reads DEDEDEDDEEDFEDDDEWED.

In terms of assembly, binds actin and the Arp2/3 complex. Interacts with CDC42. Interacts with FCHSD1. Interacts with FCHSD2. Binds to SH3 domains of GRB2. Interacts with the C-terminal SH3 domain of DNMBP. Interacts with SNX9. Interacts with the WW domains of PRPF40A/FBP11. Interacts with PTK2/FAK1. Interacts with PACSIN1, PACSIN2 and PACSIN3. Interacts with NOSTRIN. Binds to TNK2. Interacts with SNX33. Interacts with NONO (via second RRM domain); the interaction is direct. Component of a multiprotein complex with NONO and SFPQ; associates with the complex via direct interaction with NONO. As to quaternary structure, (Microbial infection) Interacts with E.coli effector protein EspF(U). Identified in a complex containing at least WASL, BAIAP2L1 and E.coli EspF(U). (Microbial infection) Interacts with Shigella flexneri protein IcsA. The interaction with IcsA enhances the affinity of WASL for Arp2/3, thus assembling a tight complex which has maximal activity in actin assembly. In terms of processing, phosphorylation at Ser-242, Tyr-256, Ser-484 and Ser-485 enhances actin polymerization activity.

The protein resides in the cytoplasm. Its subcellular location is the cytoskeleton. The protein localises to the nucleus. Regulates actin polymerization by stimulating the actin-nucleating activity of the Arp2/3 complex. Involved in various processes, such as mitosis and cytokinesis, via its role in the regulation of actin polymerization. Together with CDC42, involved in the extension and maintenance of the formation of thin, actin-rich surface projections called filopodia. In addition to its role in the cytoplasm, also plays a role in the nucleus by regulating gene transcription, probably by promoting nuclear actin polymerization. Binds to HSF1/HSTF1 and forms a complex on heat shock promoter elements (HSE) that negatively regulates HSP90 expression. Plays a role in dendrite spine morphogenesis. Decreasing levels of DNMBP (using antisense RNA) alters apical junction morphology in cultured enterocytes, junctions curve instead of being nearly linear. The protein is Actin nucleation-promoting factor WASL (WASL) of Homo sapiens (Human).